The sequence spans 251 residues: Uridylate kinase (251 aa).

24–27 (KISG) serves as a coordination point for ATP. Positions 32 to 37 (GDQGFG) are involved in allosteric activation by GTP. Residue glycine 66 participates in UMP binding. Residues glycine 67 and arginine 71 each coordinate ATP. Residues aspartate 86 and 147 to 154 (TGNPYFTT) each bind UMP. ATP-binding residues include asparagine 175, tyrosine 181, and aspartate 184.

Belongs to the UMP kinase family. Homohexamer.

The protein resides in the cytoplasm. It carries out the reaction UMP + ATP = UDP + ADP. Its pathway is pyrimidine metabolism; CTP biosynthesis via de novo pathway; UDP from UMP (UMPK route): step 1/1. Allosterically activated by GTP. Inhibited by UTP. Catalyzes the reversible phosphorylation of UMP to UDP. This Ruegeria pomeroyi (strain ATCC 700808 / DSM 15171 / DSS-3) (Silicibacter pomeroyi) protein is Uridylate kinase.